Here is a 122-residue protein sequence, read N- to C-terminus: Large ribosomal subunit protein uL14 (122 aa).

Belongs to the universal ribosomal protein uL14 family. As to quaternary structure, part of the 50S ribosomal subunit. Forms a cluster with proteins L3 and L19. In the 70S ribosome, L14 and L19 interact and together make contacts with the 16S rRNA in bridges B5 and B8.

In terms of biological role, binds to 23S rRNA. Forms part of two intersubunit bridges in the 70S ribosome. This Caulobacter vibrioides (strain ATCC 19089 / CIP 103742 / CB 15) (Caulobacter crescentus) protein is Large ribosomal subunit protein uL14.